Consider the following 350-residue polypeptide: 4-hydroxy-3-methylbut-2-enyl diphosphate reductase (350 aa).

Position 19 (C19) interacts with [4Fe-4S] cluster. The (2E)-4-hydroxy-3-methylbut-2-enyl diphosphate site is built by H48 and H84. Positions 48 and 84 each coordinate dimethylallyl diphosphate. Residues H48 and H84 each contribute to the isopentenyl diphosphate site. C106 is a binding site for [4Fe-4S] cluster. H134 contributes to the (2E)-4-hydroxy-3-methylbut-2-enyl diphosphate binding site. H134 contributes to the dimethylallyl diphosphate binding site. H134 is an isopentenyl diphosphate binding site. E136 acts as the Proton donor in catalysis. T175 lines the (2E)-4-hydroxy-3-methylbut-2-enyl diphosphate pocket. C205 serves as a coordination point for [4Fe-4S] cluster. Residues S233, S234, N235, and S278 each coordinate (2E)-4-hydroxy-3-methylbut-2-enyl diphosphate. Residues S233, S234, N235, and S278 each coordinate dimethylallyl diphosphate. The isopentenyl diphosphate site is built by S233, S234, N235, and S278.

It belongs to the IspH family. The cofactor is [4Fe-4S] cluster.

The catalysed reaction is isopentenyl diphosphate + 2 oxidized [2Fe-2S]-[ferredoxin] + H2O = (2E)-4-hydroxy-3-methylbut-2-enyl diphosphate + 2 reduced [2Fe-2S]-[ferredoxin] + 2 H(+). It catalyses the reaction dimethylallyl diphosphate + 2 oxidized [2Fe-2S]-[ferredoxin] + H2O = (2E)-4-hydroxy-3-methylbut-2-enyl diphosphate + 2 reduced [2Fe-2S]-[ferredoxin] + 2 H(+). The protein operates within isoprenoid biosynthesis; dimethylallyl diphosphate biosynthesis; dimethylallyl diphosphate from (2E)-4-hydroxy-3-methylbutenyl diphosphate: step 1/1. Its pathway is isoprenoid biosynthesis; isopentenyl diphosphate biosynthesis via DXP pathway; isopentenyl diphosphate from 1-deoxy-D-xylulose 5-phosphate: step 6/6. In terms of biological role, catalyzes the conversion of 1-hydroxy-2-methyl-2-(E)-butenyl 4-diphosphate (HMBPP) into a mixture of isopentenyl diphosphate (IPP) and dimethylallyl diphosphate (DMAPP). Acts in the terminal step of the DOXP/MEP pathway for isoprenoid precursor biosynthesis. In Brucella anthropi (strain ATCC 49188 / DSM 6882 / CCUG 24695 / JCM 21032 / LMG 3331 / NBRC 15819 / NCTC 12168 / Alc 37) (Ochrobactrum anthropi), this protein is 4-hydroxy-3-methylbut-2-enyl diphosphate reductase.